The primary structure comprises 463 residues: MSTSFACTTCTVAFNNAESQKIHWKSDWHHYNLKRKVASLPPLSAEVFAGKILSIQKQNEEVQKKAEFYQNCEVCNKKFYSEGAYSSHMASKKHRDNLSKFQRNSRIKKLQSEDASSIASSTLSMGEPVVDSEIEEEEDLASQLTSRAISLSNLSLHGRESEPSKTELATSIPQSNEASKSHLFTQEPTPEEIEAELARRSSQRLSPRDCLFCAASFSSFDTCKKHMKASHSLYIPEREYLVDEPSLFDYLAEKISIGFTCLTCNREFKSLEAVRAHMQQKGHTSIAYDTEDEQLELSDFYDFTTSYPDYAVKQDETVVEEDGSSGEGDWEDVSDDSDNSSLDSLEMGRVPIADEYELHLPSGNRVGHRSLSRYFRQNLHSSSTAVGDGASIHQNVARRAMSGNARAYRQAVETSIAGVRDGRKNYSASHIKSFQDQRRREEFANKMGIKNNTKKHFRDALLQ.

C2H2-type zinc fingers lie at residues 5 to 30 (FACT…DWHH) and 70 to 94 (QNCE…SKKH). Residues 109-136 (KLQSEDASSIASSTLSMGEPVVDSEIEE) form a disordered region. Positions 113–124 (EDASSIASSTLS) are enriched in polar residues. Phosphoserine occurs at positions 150 and 155. Residues 155–189 (SLHGRESEPSKTELATSIPQSNEASKSHLFTQEPT) are disordered. Residues 167–188 (ELATSIPQSNEASKSHLFTQEP) show a composition bias toward polar residues. 2 C2H2-type zinc fingers span residues 208–231 (RDCL…KASH) and 259–283 (FTCL…QKGH). Over residues 317–338 (TVVEEDGSSGEGDWEDVSDDSD) the composition is skewed to acidic residues. Disordered stretches follow at residues 317–341 (TVVE…DNSS) and 444–463 (ANKM…ALLQ).

This sequence belongs to the REI1 family. In terms of assembly, associates with nascent pre-60S particles that have not yet entered the translating pool, and is released from mature 60S subunits.

It localises to the cytoplasm. Pre-60S-associated factor involved in the cytoplasmic maturation of the 60S subunit. Involved in the dissociation and recycling of other late pre-60S factors before newly synthesized large ribosomal subunits enter translation. This is Cytoplasmic 60S subunit biogenesis factor SPCC550.15c from Schizosaccharomyces pombe (strain 972 / ATCC 24843) (Fission yeast).